Here is a 367-residue protein sequence, read N- to C-terminus: Peptide chain release factor 2 (367 aa).

N5-methylglutamine is present on Gln-247.

This sequence belongs to the prokaryotic/mitochondrial release factor family. In terms of processing, methylated by PrmC. Methylation increases the termination efficiency of RF2.

The protein resides in the cytoplasm. Peptide chain release factor 2 directs the termination of translation in response to the peptide chain termination codons UGA and UAA. The polypeptide is Peptide chain release factor 2 (Caulobacter sp. (strain K31)).